Reading from the N-terminus, the 686-residue chain is X-linked interleukin-1 receptor accessory protein-like 2 (686 aa).

A signal peptide spans 1 to 16; the sequence is MKLPLLLALVVCSAVS. Topologically, residues 17 to 354 are extracellular; that stretch reads TNLKMVSKRN…LLRKKDLIYK (338 aa). Positions 32 to 132 constitute an Ig-like C2-type 1 domain; sequence IDWSVDLKTY…YCMKVSMSLT (101 aa). Cys-53 and Cys-116 form a disulfide bridge. Asn-63, Asn-120, Asn-136, Asn-211, and Asn-328 each carry an N-linked (GlcNAc...) asparagine glycan. 2 Ig-like C2-type domains span residues 141 to 232 and 239 to 347; these read CYNS…LKVT and PPKP…VLLR. 2 cysteine pairs are disulfide-bonded: Cys-162/Cys-214 and Cys-265/Cys-331. The helical transmembrane segment at 355–375 threads the bilayer; that stretch reads IELAGGLGAIFLLLILLLVVY. Topologically, residues 376–686 are cytoplasmic; that stretch reads KCYNIELMLF…KELSFTSDIW (311 aa). The region spanning 400–556 is the TIR domain; sequence KEYDAYLSYT…KFWKHLVYEM (157 aa). The active site involves Glu-488.

This sequence belongs to the interleukin-1 receptor family. In terms of tissue distribution, detected in fetal brain after day 12.5, in particular in parts of the diencephalon and in the basal plate of the spinal cord. In postnatal brain detected in cerebral cortex, olfactory bulb, in the CA1 region of the hippocampus and in Purkinje cells of the Xth cerebellar lobule.

It is found in the membrane. The enzyme catalyses NAD(+) + H2O = ADP-D-ribose + nicotinamide + H(+). The sequence is that of X-linked interleukin-1 receptor accessory protein-like 2 (Il1rapl2) from Mus musculus (Mouse).